We begin with the raw amino-acid sequence, 293 residues long: RNA pseudouridylate synthase domain-containing protein 1 (293 aa).

Residue D67 is part of the active site.

This sequence belongs to the pseudouridine synthase RluA family.

The protein is RNA pseudouridylate synthase domain-containing protein 1 (rpusd1) of Danio rerio (Zebrafish).